A 162-amino-acid polypeptide reads, in one-letter code: F protein (162 aa).

Positions 1–23 (MSTNPKPQRKKPNVTPTVAHRTS) are disordered. Positions 14-23 (VTPTVAHRTS) are enriched in polar residues.

The protein localises to the host cytoplasm. The protein resides in the host perinuclear region. Its function is as follows. Contributes to the RIGI-mediated inhibition of type I interferon production. The sequence is that of F protein from Homo sapiens (Human).